The primary structure comprises 224 residues: Uracil-DNA glycosylase (224 aa).

Asp-62 acts as the Proton acceptor in catalysis.

It belongs to the uracil-DNA glycosylase (UDG) superfamily. UNG family.

Its subcellular location is the cytoplasm. The enzyme catalyses Hydrolyzes single-stranded DNA or mismatched double-stranded DNA and polynucleotides, releasing free uracil.. In terms of biological role, excises uracil residues from the DNA which can arise as a result of misincorporation of dUMP residues by DNA polymerase or due to deamination of cytosine. This chain is Uracil-DNA glycosylase, found in Aliivibrio salmonicida (strain LFI1238) (Vibrio salmonicida (strain LFI1238)).